The primary structure comprises 3184 residues: Cilia and flagella-associated protein 47 (3184 aa).

The Calponin-homology (CH) domain occupies 1729–1851 (SDSERILLSW…LCVYLYERLP (123 aa)). The segment at 2491 to 2514 (RDEEESQEETDTEKDFSSQETPSD) is disordered. Residues 2493–2502 (EEESQEETDT) are compositionally biased toward acidic residues.

Interacts with CFAP65. In terms of tissue distribution, highly expressed in spermatzoa (at protein level).

The protein localises to the cytoplasm. The protein resides in the cytoskeleton. It is found in the flagellum basal body. Functionally, plays a role in flagellar formation and sperm motility. In Mus musculus (Mouse), this protein is Cilia and flagella-associated protein 47.